The primary structure comprises 450 residues: MRECISIHVGQAGVQIGNACWELYCLEHGIQPDGQMPSDKTIGGGDDSFNTFFSETGAGKHVPRAVFVDLEPTVVDEVRTGTYRQLFHPEQLITGKEDAANNYARGHYTIGKEIVDLVLDRVRKLSDQCTGLQGFLIFHSFGGGTGSGFASLLMERLSVDYGKKSKLEFAIYPAPQVSTAVVEPYNSILTTHTTLEHSDCAFMVDNEAIYDICRRNLDIERPTYTNLNRLIGQIVSSITASLRFDGALNVDLTEFQTNLVPYPRIHFPLVTYAPVISAEKAYHEMLSVAEITNACFEPANQMVKCDPRHGKYMACCMLYRGDVVPKDVNAAIATIKTKRTIQFVDWCPTGFKVGINYQPPTVVPGGDLAKVQRAVCMLSNTTAIAEAWARLDHKFDLMYAKRAFVHWYVGEGMEEGEFSEAREDLAALEKDYEEVGVDSVEGEAEEGEEY.

The short motif at 1–4 (MREC) is the MREC motif element. GTP is bound at residue Q11. Residue K40 is modified to N6-acetyllysine. Residues E71, S140, G144, T145, T179, N206, and N228 each coordinate GTP. Position 71 (E71) interacts with Mg(2+). The active site involves E254.

This sequence belongs to the tubulin family. Dimer of alpha and beta chains. A typical microtubule is a hollow water-filled tube with an outer diameter of 25 nm and an inner diameter of 15 nM. Alpha-beta heterodimers associate head-to-tail to form protofilaments running lengthwise along the microtubule wall with the beta-tubulin subunit facing the microtubule plus end conferring a structural polarity. Microtubules usually have 13 protofilaments but different protofilament numbers can be found in some organisms and specialized cells. The cofactor is Mg(2+). Post-translationally, some glutamate residues at the C-terminus are polyglycylated, resulting in polyglycine chains on the gamma-carboxyl group. Glycylation is mainly limited to tubulin incorporated into axonemes (cilia and flagella) whereas glutamylation is prevalent in neuronal cells, centrioles, axonemes, and the mitotic spindle. Both modifications can coexist on the same protein on adjacent residues, and lowering polyglycylation levels increases polyglutamylation, and reciprocally. The precise function of polyglycylation is still unclear. In terms of processing, some glutamate residues at the C-terminus are polyglutamylated, resulting in polyglutamate chains on the gamma-carboxyl group. Polyglutamylation plays a key role in microtubule severing by spastin (SPAST). SPAST preferentially recognizes and acts on microtubules decorated with short polyglutamate tails: severing activity by SPAST increases as the number of glutamates per tubulin rises from one to eight, but decreases beyond this glutamylation threshold. Acetylation of alpha chains at Lys-40 is located inside the microtubule lumen. This modification has been correlated with increased microtubule stability, intracellular transport and ciliary assembly. Post-translationally, undergoes a tyrosination/detyrosination cycle, the cyclic removal and re-addition of a C-terminal tyrosine residue by the enzymes tubulin tyrosine carboxypeptidase (MATCAP, VASH1 or VASH2) and tubulin tyrosine ligase (TTL), respectively. In terms of processing, tyrosination promotes microtubule interaction with CAP-Gly microtubule plus-end tracking proteins. Tyrosinated tubulins regulate the initiation of dynein-driven motility. Detyrosination is involved in metaphase plate congression by guiding chromosomes during mitosis. Detyrosination increases microtubules-dependent mechanotransduction in dystrophic cardiac and skeletal muscle. In cardiomyocytes, detyrosinated microtubules are required to resist to contractile compression during contraction. Testis specific.

It is found in the cytoplasm. It localises to the cytoskeleton. The enzyme catalyses GTP + H2O = GDP + phosphate + H(+). Its function is as follows. Tubulin is the major constituent of microtubules, a cylinder consisting of laterally associated linear protofilaments composed of alpha- and beta-tubulin heterodimers. Microtubules grow by the addition of GTP-tubulin dimers to the microtubule end, where a stabilizing cap forms. Below the cap, tubulin dimers are in GDP-bound state, owing to GTPase activity of alpha-tubulin. The polypeptide is Tubulin alpha chain, testis-specific (Oncorhynchus mykiss (Rainbow trout)).